A 100-amino-acid chain; its full sequence is Urease subunit gamma (100 aa).

Belongs to the urease gamma subunit family. Heterotrimer of UreA (gamma), UreB (beta) and UreC (alpha) subunits. Three heterotrimers associate to form the active enzyme.

It is found in the cytoplasm. It carries out the reaction urea + 2 H2O + H(+) = hydrogencarbonate + 2 NH4(+). It participates in nitrogen metabolism; urea degradation; CO(2) and NH(3) from urea (urease route): step 1/1. This chain is Urease subunit gamma, found in Sinorhizobium fredii (strain NBRC 101917 / NGR234).